A 145-amino-acid chain; its full sequence is Deoxyuridine 5'-triphosphate nucleotidohydrolase (145 aa).

Substrate is bound by residues 64–66, Asn77, 81–83, and Met91; these read RSG and TID.

The protein belongs to the dUTPase family. Requires Mg(2+) as cofactor.

The enzyme catalyses dUTP + H2O = dUMP + diphosphate + H(+). The protein operates within pyrimidine metabolism; dUMP biosynthesis; dUMP from dCTP (dUTP route): step 2/2. Functionally, this enzyme is involved in nucleotide metabolism: it produces dUMP, the immediate precursor of thymidine nucleotides and it decreases the intracellular concentration of dUTP so that uracil cannot be incorporated into DNA. The chain is Deoxyuridine 5'-triphosphate nucleotidohydrolase from Leptospira borgpetersenii serovar Hardjo-bovis (strain JB197).